We begin with the raw amino-acid sequence, 336 residues long: CMP-sialic acid transporter (336 aa).

Residues 1-9 lie on the Cytoplasmic side of the membrane; the sequence is MAQARENVS. Residues 10–30 traverse the membrane as a helical segment; the sequence is LFFKLYCLAVMTLVAAAYTVA. At 31–45 the chain is on the lumenal side; that stretch reads LRYTRTTAKELYFST. The chain crosses the membrane as a helical span at residues 46–64; sequence TAVCVTEVIKLLISVGLLA. K55 contacts CMP-N-acetyl-beta-neuraminate. Residues 65 to 87 are Cytoplasmic-facing; sequence KETGSLGRFKASLSENVLGSPKE. The helical transmembrane segment at 88–108 threads the bilayer; that stretch reads LMKLSVPSLVYAVQNNMAFLA. A CMP-N-acetyl-beta-neuraminate-binding site is contributed by 101-102; that stretch reads QN. Over 109–114 the chain is Lumenal; it reads LSNLDA. A helical transmembrane segment spans residues 115–135; it reads AVYQVTYQLKIPCTALCTVLM. CMP-N-acetyl-beta-neuraminate is bound at residue 117-124; it reads YQVTYQLK. Over 136 to 141 the chain is Cytoplasmic; the sequence is LNRTLS. Residues 142-160 traverse the membrane as a helical segment; the sequence is KLQWVSVFMLCGGVILVQW. At 161-175 the chain is on the lumenal side; sequence KPAQATKVVVEQSPL. The helical transmembrane segment at 176-196 threads the bilayer; sequence LGFGAIAIAVLCSGFAGVYFE. S188 is a CMP-N-acetyl-beta-neuraminate binding site. At 197–209 the chain is on the cytoplasmic side; sequence KVLKSSDTSLWVR. 210–214 is a CMP-N-acetyl-beta-neuraminate binding site; it reads NIQMY. A helical transmembrane segment spans residues 210–228; it reads NIQMYLSGIVVTLVGTYLS. At 229–243 the chain is on the lumenal side; sequence DGAEIKEKGFFYGYT. Residues 244 to 262 form a helical membrane-spanning segment; it reads YYVWFVIFLASVGGLYTSV. Residues 263–269 are Cytoplasmic-facing; it reads VVKYTDN. The chain crosses the membrane as a helical span at residues 270–288; sequence IMKGFSAAAAIVLSTIASV. K272 contributes to the CMP-N-acetyl-beta-neuraminate binding site. Residues 289 to 296 are Lumenal-facing; that stretch reads MLFGLQIT. The helical transmembrane segment at 297–315 threads the bilayer; that stretch reads LSFAMGALLVCISIYLYGL. The Cytoplasmic portion of the chain corresponds to 316 to 336; the sequence is PRQDTTCIQQEATSKERVIGV. The segment at 316–336 is disordered; that stretch reads PRQDTTCIQQEATSKERVIGV.

This sequence belongs to the nucleotide-sugar transporter family. SLC35A subfamily. In terms of assembly, monomer.

The protein localises to the golgi apparatus membrane. It catalyses the reaction CMP-N-acetyl-beta-neuraminate(in) + CMP(out) = CMP-N-acetyl-beta-neuraminate(out) + CMP(in). It carries out the reaction CMP-N-acetyl-beta-neuraminate(in) + AMP(out) = CMP-N-acetyl-beta-neuraminate(out) + AMP(in). The catalysed reaction is CDP-L-ribitol(in) + CDP(out) = CDP-L-ribitol(out) + CDP(in). The enzyme catalyses UMP(out) + CMP-N-acetyl-beta-neuraminate(in) = UMP(in) + CMP-N-acetyl-beta-neuraminate(out). In terms of biological role, transports CMP-sialic acid from the cytosol into the Golgi apparatus, functioning as an antiporter that exchanges CMP-sialic acid for CMP. Binds both CMP-sialic acid and free CMP, but has higher affinity for free CMP. Also able to exchange CMP-sialic acid for AMP and UMP. Also mediates the transport of CDP-ribitol. The polypeptide is CMP-sialic acid transporter (SLC35A1) (Cricetulus griseus (Chinese hamster)).